The primary structure comprises 117 residues: MRVKTGVVRRRRHKKILKLARGFYSGRRKHFRKAKEQLERSMCYAFRDRKQKKRDFRRLWITRINAACKMNGVSYSRFIHALKLANIELDRKTLADMAMNDINAFNAVLASVKNKLK.

This sequence belongs to the bacterial ribosomal protein bL20 family.

In terms of biological role, binds directly to 23S ribosomal RNA and is necessary for the in vitro assembly process of the 50S ribosomal subunit. It is not involved in the protein synthesizing functions of that subunit. The sequence is that of Large ribosomal subunit protein bL20 from Helicobacter hepaticus (strain ATCC 51449 / 3B1).